The sequence spans 583 residues: Threonine--tRNA ligase (583 aa).

Positions 185 to 478 (DHRKLGRELD…LVEHYGGAFP (294 aa)) are catalytic. Zn(2+) contacts are provided by Cys278, His329, and His455.

It belongs to the class-II aminoacyl-tRNA synthetase family. As to quaternary structure, homodimer. Zn(2+) is required as a cofactor.

It is found in the cytoplasm. The enzyme catalyses tRNA(Thr) + L-threonine + ATP = L-threonyl-tRNA(Thr) + AMP + diphosphate + H(+). Its function is as follows. Catalyzes the attachment of threonine to tRNA(Thr) in a two-step reaction: L-threonine is first activated by ATP to form Thr-AMP and then transferred to the acceptor end of tRNA(Thr). Also edits incorrectly charged L-seryl-tRNA(Thr). This is Threonine--tRNA ligase from Borrelia turicatae (strain 91E135).